Consider the following 350-residue polypeptide: Derriere protein (350 aa).

The N-terminal stretch at 1–16 is a signal peptide; it reads MLSLACFFSFLLMVKS. Positions 17 to 236 are excised as a propeptide; the sequence is SPLTFQERML…SSCKTPRAKR (220 aa). Asn-171 and Asn-202 each carry an N-linked (GlcNAc...) asparagine glycan. 3 cysteine pairs are disulfide-bonded: Cys-249–Cys-315, Cys-278–Cys-347, and Cys-282–Cys-349.

This sequence belongs to the TGF-beta family. In terms of assembly, homodimer; disulfide-linked. Also forms heterodimers with other TGF-beta family members including nodal2/nr-2 and bmp4.

The protein localises to the secreted. Functionally, required for posterior mesoderm formation during embryogenesis. Acts indirectly to suppress head formation by altering mesodermal patterning. Also involved in the establishment of left-right axis asymmetry, acting upstream of nodal/nr-1. Can exert long-range effects in the embryo. The protein is Derriere protein of Xenopus tropicalis (Western clawed frog).